The primary structure comprises 168 residues: Ribosome-binding factor A (168 aa).

Basic and acidic residues predominate over residues 125–138 (RVREGAKHAGDSDP). The tract at residues 125-168 (RVREGAKHAGDSDPYRVLGEGDLEGPATGGPDVEDEGGANSHDR) is disordered.

The protein belongs to the RbfA family. As to quaternary structure, monomer. Binds 30S ribosomal subunits, but not 50S ribosomal subunits or 70S ribosomes.

It is found in the cytoplasm. In terms of biological role, one of several proteins that assist in the late maturation steps of the functional core of the 30S ribosomal subunit. Associates with free 30S ribosomal subunits (but not with 30S subunits that are part of 70S ribosomes or polysomes). Required for efficient processing of 16S rRNA. May interact with the 5'-terminal helix region of 16S rRNA. This is Ribosome-binding factor A from Mycolicibacterium gilvum (strain PYR-GCK) (Mycobacterium gilvum (strain PYR-GCK)).